The chain runs to 248 residues: Ureidoacrylate amidohydrolase RutB (248 aa).

Asp-41 functions as the Proton acceptor in the catalytic mechanism. The active site involves Lys-150. Cys-183 (nucleophile) is an active-site residue.

Belongs to the isochorismatase family. RutB subfamily.

The catalysed reaction is (Z)-3-ureidoacrylate + H2O + H(+) = (Z)-3-aminoacrylate + NH4(+) + CO2. The enzyme catalyses (Z)-3-ureidoacrylate + H2O = (Z)-3-aminoacrylate + carbamate + H(+). It carries out the reaction (Z)-2-methylureidoacrylate + H2O + H(+) = (Z)-2-methylaminoacrylate + NH4(+) + CO2. Its function is as follows. Hydrolyzes ureidoacrylate to form aminoacrylate and carbamate. The carbamate hydrolyzes spontaneously, thereby releasing one of the nitrogen atoms of the pyrimidine ring as ammonia and one of its carbon atoms as CO2. The chain is Ureidoacrylate amidohydrolase RutB from Methylorubrum extorquens (strain DSM 6343 / CIP 106787 / DM4) (Methylobacterium extorquens).